Here is an 860-residue protein sequence, read N- to C-terminus: Beta-glucosidase A (860 aa).

The signal sequence occupies residues Met1 to Ala19. Residues Asn61, Asn211, and Asn252 are each glycosylated (N-linked (GlcNAc...) asparagine). Asp280 is an active-site residue. N-linked (GlcNAc...) asparagine glycosylation is found at Asn315, Asn322, Asn354, Asn387, Asn442, Asn523, Asn542, Asn564, Asn658, Asn690, and Asn712. The tract at residues Ser719–Gly753 is disordered.

It belongs to the glycosyl hydrolase 3 family.

It is found in the secreted. It carries out the reaction Hydrolysis of terminal, non-reducing beta-D-glucosyl residues with release of beta-D-glucose.. Its pathway is glycan metabolism; cellulose degradation. Functionally, beta-glucosidases are one of a number of cellulolytic enzymes involved in the degradation of cellulosic biomass. Catalyzes the last step releasing glucose from the inhibitory cellobiose. The chain is Beta-glucosidase A (bglA) from Aspergillus kawachii (strain NBRC 4308) (White koji mold).